Here is a 336-residue protein sequence, read N- to C-terminus: Poly(A) RNA polymerase cid12 (336 aa).

2 residues coordinate Mg(2+): aspartate 77 and aspartate 79. The 55-residue stretch at 209–263 (ALLQKFFYFWGVEWTYELFVLRPLTGQIVPKLQKGWLNEVQPNLLSIEDPIDRNN) folds into the PAP-associated domain. Serine 325 carries the post-translational modification Phosphoserine. A Phosphothreonine modification is found at threonine 327. Serine 329 is modified (phosphoserine).

It belongs to the DNA polymerase type-B-like family. As to quaternary structure, cid12, hrr1 and rdp1 interact forming the RNA-directed RNA polymerase complex (RDRC). The RDRC complex interacts with the RITS complex via interaction between ago1 and hrr1. Clr4 has a role in mediating this interaction. Requires Mg(2+) as cofactor. Mn(2+) serves as cofactor.

The protein resides in the cytoplasm. It localises to the nucleus. The catalysed reaction is RNA(n) + ATP = RNA(n)-3'-adenine ribonucleotide + diphosphate. Its function is as follows. Has a role in the RNA interference (RNAi) pathway which is important for heterochromatin formation and accurate chromosome segregation. A member of the RNA-directed RNA polymerase complex (RDRC) which is involved in the generation of small interfering RNAs (siRNAs) and mediate their association with the RNA-induced transcriptional silencing (RITS) complex. RITS acts as a priming complex for dsRNA synthesis at the site of non-coding centromeric RNA. The protein is Poly(A) RNA polymerase cid12 (cid12) of Schizosaccharomyces pombe (strain 972 / ATCC 24843) (Fission yeast).